Reading from the N-terminus, the 275-residue chain is Glutamate 5-kinase (275 aa).

Residue Lys17 participates in ATP binding. The substrate site is built by Ser57, Asp144, and Asn160. ATP contacts are provided by residues 180–181 (SD) and 222–228 (TGGMLSK).

This sequence belongs to the glutamate 5-kinase family.

It localises to the cytoplasm. It carries out the reaction L-glutamate + ATP = L-glutamyl 5-phosphate + ADP. Its pathway is amino-acid biosynthesis; L-proline biosynthesis; L-glutamate 5-semialdehyde from L-glutamate: step 1/2. Catalyzes the transfer of a phosphate group to glutamate to form L-glutamate 5-phosphate. The sequence is that of Glutamate 5-kinase from Streptococcus pyogenes serotype M12 (strain MGAS2096).